A 192-amino-acid chain; its full sequence is Pyridoxal 5'-phosphate synthase subunit PdxT (192 aa).

50-52 (GES) is an L-glutamine binding site. Catalysis depends on C82, which acts as the Nucleophile. L-glutamine-binding positions include R109 and 136–137 (IR). Active-site charge relay system residues include H172 and E174.

It belongs to the glutaminase PdxT/SNO family. In the presence of PdxS, forms a dodecamer of heterodimers. Only shows activity in the heterodimer.

The enzyme catalyses aldehydo-D-ribose 5-phosphate + D-glyceraldehyde 3-phosphate + L-glutamine = pyridoxal 5'-phosphate + L-glutamate + phosphate + 3 H2O + H(+). It catalyses the reaction L-glutamine + H2O = L-glutamate + NH4(+). Its pathway is cofactor biosynthesis; pyridoxal 5'-phosphate biosynthesis. In terms of biological role, catalyzes the hydrolysis of glutamine to glutamate and ammonia as part of the biosynthesis of pyridoxal 5'-phosphate. The resulting ammonia molecule is channeled to the active site of PdxS. This Haemophilus influenzae (strain PittEE) protein is Pyridoxal 5'-phosphate synthase subunit PdxT.